The chain runs to 332 residues: Ribosomal RNA small subunit methyltransferase C (332 aa).

This sequence belongs to the methyltransferase superfamily. RsmC family. Monomer.

The protein resides in the cytoplasm. The enzyme catalyses guanosine(1207) in 16S rRNA + S-adenosyl-L-methionine = N(2)-methylguanosine(1207) in 16S rRNA + S-adenosyl-L-homocysteine + H(+). In terms of biological role, specifically methylates the guanine in position 1207 of 16S rRNA in the 30S particle. In Pseudomonas syringae pv. syringae (strain B728a), this protein is Ribosomal RNA small subunit methyltransferase C.